We begin with the raw amino-acid sequence, 1063 residues long: Valine--tRNA ligase, mitochondrial (1063 aa).

The N-terminal 26 residues, 1-26 (MPHLPLASFRPPFWGLRHSRGLPRFH), are a transit peptide targeting the mitochondrion. Residues 25–53 (FHSVSTQSEPHGSPISRRNREAKQKRLRE) form a disordered region. Over residues 42 to 53 (RNREAKQKRLRE) the composition is skewed to basic and acidic residues. Positions 146 to 156 (PNVTGSLHIGH) match the 'HIGH' region motif. Residues 658-662 (KMSKS) carry the 'KMSKS' region motif. Residue lysine 661 participates in ATP binding.

The protein belongs to the class-I aminoacyl-tRNA synthetase family.

It localises to the mitochondrion. It carries out the reaction tRNA(Val) + L-valine + ATP = L-valyl-tRNA(Val) + AMP + diphosphate. Catalyzes the attachment of valine to tRNA(Val) in a two-step reaction: valine is first activated by ATP to form Val-AMP and then transferred to the acceptor end of tRNA(Val). This Homo sapiens (Human) protein is Valine--tRNA ligase, mitochondrial (VARS2).